Here is a 382-residue protein sequence, read N- to C-terminus: Lactosylceramide 1,3-N-acetyl-beta-D-glucosaminyltransferase B (382 aa).

The Cytoplasmic portion of the chain corresponds to 1–13 (MAVLKMPRFKKYH). Residues 14–30 (LRLMITCFSTLLLMTYW) traverse the membrane as a helical; Signal-anchor for type II membrane protein segment. Residues 31–382 (EKIDNCVVTH…CKAAFFEEDT (352 aa)) lie on the Lumenal side of the membrane. N-linked (GlcNAc...) asparagine glycans are attached at residues N57, N112, N167, and N276.

The protein belongs to the glycosyltransferase 31 family.

The protein resides in the golgi apparatus membrane. It carries out the reaction a beta-D-Gal-(1-&gt;4)-beta-D-Glc-(1&lt;-&gt;1)-Cer(d18:1(4E)) + UDP-N-acetyl-alpha-D-glucosamine = a beta-D-GlcNAc-(1-&gt;3)-beta-D-Gal-(1-&gt;4)-beta-D-Glc-(1&lt;-&gt;1)-Cer(d18:1(4E)) + UDP + H(+). It catalyses the reaction a neolactoside nLc4Cer(d18:1(4E)) + UDP-N-acetyl-alpha-D-glucosamine = a neolactoside IV(3)-beta-GlcNAc-nLc4Cer(d18:1(4E)) + UDP + H(+). The protein operates within protein modification; protein glycosylation. Beta-1,3-N-acetylglucosaminyltransferase that plays a key role in the synthesis of lacto- or neolacto-series carbohydrate chains on glycolipids. This is Lactosylceramide 1,3-N-acetyl-beta-D-glucosaminyltransferase B (b3gnt5b) from Danio rerio (Zebrafish).